The following is a 371-amino-acid chain: Histidinol-phosphate aminotransferase (371 aa).

Lys-228 carries the N6-(pyridoxal phosphate)lysine modification.

This sequence belongs to the class-II pyridoxal-phosphate-dependent aminotransferase family. Histidinol-phosphate aminotransferase subfamily. It depends on pyridoxal 5'-phosphate as a cofactor.

The enzyme catalyses L-histidinol phosphate + 2-oxoglutarate = 3-(imidazol-4-yl)-2-oxopropyl phosphate + L-glutamate. It functions in the pathway amino-acid biosynthesis; L-histidine biosynthesis; L-histidine from 5-phospho-alpha-D-ribose 1-diphosphate: step 7/9. The chain is Histidinol-phosphate aminotransferase from Methanococcus aeolicus (strain ATCC BAA-1280 / DSM 17508 / OCM 812 / Nankai-3).